Consider the following 547-residue polypeptide: Ribosomal lysine N-methyltransferase set10 (547 aa).

Residues 17 to 235 (KSVEFIQSRD…KGNQLFNNYG (219 aa)) form the SET domain. Tyr-234 provides a ligand contact to S-adenosyl-L-methionine.

The protein belongs to the class V-like SAM-binding methyltransferase superfamily. RKM1 family.

It localises to the cytoplasm. Its subcellular location is the nucleus. S-adenosyl-L-methionine-dependent protein-lysine N-methyltransferase that methylates ribosomal protein L23 (rpl23a and rpl23b). This Schizosaccharomyces pombe (strain 972 / ATCC 24843) (Fission yeast) protein is Ribosomal lysine N-methyltransferase set10 (set10).